A 263-amino-acid polypeptide reads, in one-letter code: Thymidylate kinase (263 aa).

A mitochondrion-targeting transit peptide spans 1 to 51 (MKRICSVSSVQLFSRSFRALASPRSLNYPLQCIKRSSVRMESSNFSSGVRT). An ATP-binding site is contributed by 66–74 (GLDRSGKST).

Belongs to the thymidylate kinase family. In terms of tissue distribution, expressed in root, rosette leaves, flower buds, flowers and siliques.

It localises to the mitochondrion. The protein resides in the cytoplasm. Its subcellular location is the nucleus. The protein localises to the nucleoplasm. It carries out the reaction dTMP + ATP = dTDP + ADP. The protein operates within pyrimidine metabolism; dTTP biosynthesis. In terms of biological role, catalyzes the conversion of dTMP to dTDP. Involved in the regulation of DNA replication. Is essential to promote the first division of the zygote. This is Thymidylate kinase from Arabidopsis thaliana (Mouse-ear cress).